A 107-amino-acid chain; its full sequence is U1-lycotoxin-Ls1g (107 aa).

The N-terminal stretch at 1–20 (MMKVLVVVALLVTLISYSSS) is a signal peptide. The propeptide occupies 21 to 41 (EGIDDLEADELLSLMANEQTR). Intrachain disulfides connect cysteine 51-cysteine 68, cysteine 58-cysteine 86, and cysteine 70-cysteine 84.

This sequence belongs to the neurotoxin 19 (CSTX) family. 04 (U1-Lctx) subfamily. As to expression, expressed by the venom gland.

It localises to the secreted. This is U1-lycotoxin-Ls1g from Lycosa singoriensis (Wolf spider).